Reading from the N-terminus, the 436-residue chain is F-box protein SKIP16 (436 aa).

The F-box; degenerate domain maps to 75 to 111; it reads RESFRMYPWNLVKRVRLCWDNLKQWLTLNFPEAKATL. Residues 295 to 436 form the ApaG domain; that stretch reads VSVTNGVQVR…FPLELPDYIF (142 aa).

In terms of assembly, part of a SCF (ASK-cullin-F-box) protein ligase complex. Interacts with SKP1A/ASK1, SKP1B/ASK2, ASK4, ASK11 and ASK13.

The protein operates within protein modification; protein ubiquitination. Its function is as follows. Component of SCF(ASK-cullin-F-box) E3 ubiquitin ligase complexes, which may mediate the ubiquitination and subsequent proteasomal degradation of target proteins. This is F-box protein SKIP16 (SKIP16) from Arabidopsis thaliana (Mouse-ear cress).